Here is a 309-residue protein sequence, read N- to C-terminus: Ribose-phosphate pyrophosphokinase (309 aa).

ATP is bound by residues 37–39 (DGE) and 96–97 (RQ). The Mg(2+) site is built by histidine 130 and aspartate 169. The active site involves lysine 192. D-ribose 5-phosphate-binding positions include arginine 194, aspartate 218, and 222 to 226 (DTAGT).

Belongs to the ribose-phosphate pyrophosphokinase family. Class I subfamily. As to quaternary structure, homohexamer. Mg(2+) serves as cofactor.

It is found in the cytoplasm. It carries out the reaction D-ribose 5-phosphate + ATP = 5-phospho-alpha-D-ribose 1-diphosphate + AMP + H(+). It participates in metabolic intermediate biosynthesis; 5-phospho-alpha-D-ribose 1-diphosphate biosynthesis; 5-phospho-alpha-D-ribose 1-diphosphate from D-ribose 5-phosphate (route I): step 1/1. In terms of biological role, involved in the biosynthesis of the central metabolite phospho-alpha-D-ribosyl-1-pyrophosphate (PRPP) via the transfer of pyrophosphoryl group from ATP to 1-hydroxyl of ribose-5-phosphate (Rib-5-P). The sequence is that of Ribose-phosphate pyrophosphokinase from Helicobacter hepaticus (strain ATCC 51449 / 3B1).